The chain runs to 197 residues: Protein lin-7 homolog C (197 aa).

The residue at position 2 (Ala-2) is an N-acetylalanine. The short motif at 2–13 (AALGEPVRLERD) is the Kinase interacting site element. Residues 10 to 65 (LERDICRAIELLEKLQRSGEVPPQKLQALQRVLQSEFCNAVREVYEHVYETVDISS) enclose the L27 domain. Positions 93–175 (VVELPKTEEG…KVKLVVRYTP (83 aa)) constitute a PDZ domain.

This sequence belongs to the lin-7 family. In terms of assembly, forms a complex with CASK and APBA1 or CASKIN1. Component of the brain-specific heterotrimeric complex (LIN-10-LIN-2-LIN-7 complex) composed of at least APBA1, CASK, and LIN7, which associates with the motor protein KIF17 to transport vesicles along microtubules. Can also interact with other modular proteins containing protein-protein interaction domains like PALS1, PALS2, MPP7, DLG1, DLG2 and DLG3 through its L27 domain. Interacts with DLG4 and GRIN2B as well as CDH1 and CTNNB1, the channels KCNJ12/Kir2.2, KCNJ4/Kir2.3 and probably KCNJ2/Kir2.1 and SLC6A12/BGT-1 via its PDZ domain. The association of LIN7A with cadherin and beta-catenin is calcium-dependent, occurs at synaptic junctions and requires the actin cytoskeleton. Interacts with EGFR, ERBB2, ERBB3 and ERBB4 with both PDZ and KID domains. Associates with KIF17 via APBA1. Interacts with HTR4. Forms a tripartite complex composed of DLG1, MPP7 and LIN7 (LIN7A or LIN7C). Interacts with MAPK12.

It is found in the cell membrane. The protein resides in the basolateral cell membrane. The protein localises to the cell junction. It localises to the postsynaptic density membrane. Its subcellular location is the tight junction. It is found in the synapse. The protein resides in the synaptosome. Its function is as follows. Plays a role in establishing and maintaining the asymmetric distribution of channels and receptors at the plasma membrane of polarized cells. Forms membrane-associated multiprotein complexes that may regulate delivery and recycling of proteins to the correct membrane domains. The tripartite complex composed of LIN7 (LIN7A, LIN7B or LIN7C), CASK and APBA1 associates with the motor protein KIF17 to transport vesicles containing N-methyl-D-aspartate (NMDA) receptor subunit NR2B along microtubules. This complex may have the potential to couple synaptic vesicle exocytosis to cell adhesion in brain. Ensures the proper localization of GRIN2B (subunit 2B of the NMDA receptor) to neuronal postsynaptic density and may function in localizing synaptic vesicles at synapses where it is recruited by beta-catenin and cadherin. Required to localize Kir2 channels, GABA transporter (SLC6A12) and EGFR/ERBB1, ERBB2, ERBB3 and ERBB4 to the basolateral membrane of epithelial cells. This Bos taurus (Bovine) protein is Protein lin-7 homolog C (LIN7C).